Here is a 252-residue protein sequence, read N- to C-terminus: dITP/XTP pyrophosphatase (252 aa).

Residue T7–K12 participates in substrate binding. D74 functions as the Proton acceptor in the catalytic mechanism. A Mg(2+)-binding site is contributed by D74. Substrate-binding positions include S75 and F193–D196. Residues P201–E224 form a disordered region. Substrate contacts are provided by residues K230 and H235 to R236.

Belongs to the HAM1 NTPase family. In terms of assembly, homodimer. It depends on Mg(2+) as a cofactor.

The enzyme catalyses XTP + H2O = XMP + diphosphate + H(+). It carries out the reaction dITP + H2O = dIMP + diphosphate + H(+). The catalysed reaction is ITP + H2O = IMP + diphosphate + H(+). Functionally, pyrophosphatase that catalyzes the hydrolysis of nucleoside triphosphates to their monophosphate derivatives, with a high preference for the non-canonical purine nucleotides XTP (xanthosine triphosphate), dITP (deoxyinosine triphosphate) and ITP. Seems to function as a house-cleaning enzyme that removes non-canonical purine nucleotides from the nucleotide pool, thus preventing their incorporation into DNA/RNA and avoiding chromosomal lesions. The polypeptide is dITP/XTP pyrophosphatase (Bifidobacterium longum subsp. infantis (strain ATCC 15697 / DSM 20088 / JCM 1222 / NCTC 11817 / S12)).